We begin with the raw amino-acid sequence, 205 residues long: Adenylate kinase (205 aa).

ATP is bound at residue 11 to 16 (GSGKGT). The interval 31–60 (STGDIFRHNVKSMTPLGVEAKRYIDNGDFV) is NMP. Residues threonine 32, arginine 37, 58-60 (DFV), 86-89 (GYPR), and glutamine 93 contribute to the AMP site. Residues 127-137 (KRAEIEGRADD) are LID. ATP is bound at residue arginine 128. Positions 134 and 145 each coordinate AMP. Glycine 173 contributes to the ATP binding site.

Belongs to the adenylate kinase family. As to quaternary structure, monomer.

The protein resides in the cytoplasm. The enzyme catalyses AMP + ATP = 2 ADP. The protein operates within purine metabolism; AMP biosynthesis via salvage pathway; AMP from ADP: step 1/1. Catalyzes the reversible transfer of the terminal phosphate group between ATP and AMP. Plays an important role in cellular energy homeostasis and in adenine nucleotide metabolism. The protein is Adenylate kinase of Micrococcus luteus (strain ATCC 4698 / DSM 20030 / JCM 1464 / CCM 169 / CCUG 5858 / IAM 1056 / NBRC 3333 / NCIMB 9278 / NCTC 2665 / VKM Ac-2230) (Micrococcus lysodeikticus).